A 775-amino-acid chain; its full sequence is Semaphorin-3E (775 aa).

An N-terminal signal peptide occupies residues 1 to 25; that stretch reads MASAGHIITLLLWGYLLELWTGGHT. Positions 32 to 516 constitute a Sema domain; it reads RLRLSHKELL…SASAVAQVRF (485 aa). Asn44 is a glycosylation site (N-linked (GlcNAc...) asparagine). Residues Cys105 and Cys115 are joined by a disulfide bond. Asn126 carries N-linked (GlcNAc...) asparagine glycosylation. 4 disulfide bridges follow: Cys133–Cys142, Cys270–Cys382, Cys294–Cys342, and Cys519–Cys537. The N-linked (GlcNAc...) asparagine glycan is linked to Asn330. Positions 581 to 669 constitute an Ig-like C2-type domain; it reads ALDKTEEHLA…SFVHTVRKIT (89 aa). Asn595 and Asn596 each carry an N-linked (GlcNAc...) asparagine glycan. A disulfide bond links Cys654 and Cys729. The tract at residues 742–775 is disordered; it reads LKMSPSKWKYANPQEKKLRSKPEHYRLPRHTLDS. The segment covering 755-775 has biased composition (basic and acidic residues); the sequence is QEKKLRSKPEHYRLPRHTLDS.

Belongs to the semaphorin family. In terms of assembly, interacts with PLXND1.

It is found in the secreted. Functionally, plays an important role in signaling via the cell surface receptor PLXND1. Mediates reorganization of the actin cytoskeleton, leading to the retraction of cell projections. Promotes focal adhesion disassembly and inhibits adhesion of endothelial cells to the extracellular matrix. Regulates angiogenesis, both during embryogenesis and after birth. Can down-regulate sprouting angiogenesis. Required for normal vascular patterning during embryogenesis. Plays an important role in ensuring the specificity of synapse formation. The protein is Semaphorin-3E (SEMA3E) of Homo sapiens (Human).